Reading from the N-terminus, the 903-residue chain is Translation initiation factor IF-2 (903 aa).

The tract at residues 66–296 (QATLKGEGPV…GRSRKREMEN (231 aa)) is disordered. Basic and acidic residues predominate over residues 121–132 (NTDETRVQEHKP). 2 stretches are compositionally biased toward low complexity: residues 139–152 (AGDAPAAEGTAAAG) and 178–195 (AATGQRAQGGEAGRGQQS). The span at 204-231 (EGRSRQDENKGSAREDQANRFATRDKEA) shows a compositional bias: basic and acidic residues. A compositionally biased stretch (basic residues) spans 246-255 (RRPAHSKPLR). Composition is skewed to basic and acidic residues over residues 263–276 (VTKDLPEKRRDRSN) and 285–296 (ESGRSRKREMEN). Residues 403–572 (ERPPVVTVMG…LLTADVAELK (170 aa)) form the tr-type G domain. Positions 412-419 (GHVDHGKT) are G1. 412–419 (GHVDHGKT) contacts GTP. The tract at residues 437–441 (GITQH) is G2. The segment at 458–461 (DTPG) is G3. GTP-binding positions include 458–462 (DTPGH) and 512–515 (NKID). A G4 region spans residues 512 to 515 (NKID). The tract at residues 548-550 (SAV) is G5.

The protein belongs to the TRAFAC class translation factor GTPase superfamily. Classic translation factor GTPase family. IF-2 subfamily.

It localises to the cytoplasm. One of the essential components for the initiation of protein synthesis. Protects formylmethionyl-tRNA from spontaneous hydrolysis and promotes its binding to the 30S ribosomal subunits. Also involved in the hydrolysis of GTP during the formation of the 70S ribosomal complex. This chain is Translation initiation factor IF-2, found in Moorella thermoacetica (strain ATCC 39073 / JCM 9320).